The primary structure comprises 380 residues: Asporin (380 aa).

A signal peptide spans 1-14 (MKEYVLLLFLALCS). A propeptide spanning residues 15-32 (AKPFFSPSHIALKNMMLK) is cleaved from the precursor. Residues 35–54 (EDTDDDDDDDDDDDDDDEDN) show a composition bias toward acidic residues. A disordered region spans residues 35–59 (EDTDDDDDDDDDDDDDDEDNSLFPT). O-linked (GalNAc...) serine glycosylation is present at S55. The LRRNT domain maps to 66–102 (FFPFDLFPMCPFGCQCYSRVVHCSDLGLTSVPTNIPF). Disulfide bonds link C75–C81 and C79–C88. LRR repeat units follow at residues 103–124 (DTRMLDLQNNKIKEIKENDFKG), 127–148 (SLYGLILNNNKLTKIHPKAFLT), 151–173 (KLRRLYLSHNQLSEIPLNLPKSL), 174–193 (AELRIHENKVKKIQKDTFKG), 196–219 (ALHVLEMSANPLDNNGIEPGAFEG), 242–263 (TLLELHLDYNKISTVELEDFKR), 266–287 (ELQRLGLGNNKITDIENGSLAN), 290–312 (RVREIHLENNKLKKIPSGLPELK), 313–334 (YLQIIFLHSNSIARVGVNDFCP), 335–357 (TVPKMKKSLYSAISLFNNPVKYW), and 358–380 (EMQPATFRCVLSRMSVQLGNFGM). The interaction with TGFB1 stretch occupies residues 166–212 (PLNLPKSLAELRIHENKVKKIQKDTFKGMNALHVLEMSANPLDNNGI). Residue N282 is glycosylated (N-linked (GlcNAc...) asparagine). C333 and C366 are joined by a disulfide.

It belongs to the small leucine-rich proteoglycan (SLRP) family. SLRP class I subfamily. In terms of assembly, interacts with TGFB1, TGFB2 and TGFB3. DCN, BGN, and FMOD inhibit binding to TGFB1. Interacts with BMP2. Interacts in vitro with type II collagen. Interacts with type I collagen. DCN can inhibit collagen binding. In terms of processing, there is no serine/glycine dipeptide sequence expected for the attachment of O-linked glycosaminoglycans and this is probably not a proteoglycan. The O-linked polysaccharide on 54-Ser is probably the mucin type linked to GalNAc. The N-linked glycan at Asn-282 is composed of variable structures of GlcNAc, mannose, fucose, HexNAc and hexose. Higher levels in osteoarthritic articular cartilage, aorta, uterus. Moderate expression in small intestine, heart, liver, bladder, ovary, stomach, and in the adrenal, thyroid, and mammary glands. Low expression in trachea, bone marrow, and lung. Colocalizes with TGFB1 in chondrocytes within osteoarthritic (OA) lesions of articular cartilage.

The protein localises to the secreted. The protein resides in the extracellular space. Its subcellular location is the extracellular matrix. Functionally, negatively regulates periodontal ligament (PDL) differentiation and mineralization to ensure that the PDL is not ossified and to maintain homeostasis of the tooth-supporting system. Inhibits BMP2-induced cytodifferentiation of PDL cells by preventing its binding to BMPR1B/BMP type-1B receptor, resulting in inhibition of BMP-dependent activation of SMAD proteins. Critical regulator of TGF-beta in articular cartilage and plays an essential role in cartilage homeostasis and osteoarthritis (OA) pathogenesis. Negatively regulates chondrogenesis in the articular cartilage by blocking the TGF-beta/receptor interaction on the cell surface and inhibiting the canonical TGF-beta/Smad signal. Binds calcium and plays a role in osteoblast-driven collagen biomineralization activity. This is Asporin (ASPN) from Homo sapiens (Human).